The chain runs to 320 residues: Ferrochelatase (320 aa).

Fe cation-binding residues include H194 and E275.

It belongs to the ferrochelatase family.

The protein localises to the cytoplasm. The catalysed reaction is heme b + 2 H(+) = protoporphyrin IX + Fe(2+). It participates in porphyrin-containing compound metabolism; protoheme biosynthesis; protoheme from protoporphyrin-IX: step 1/1. In terms of biological role, catalyzes the ferrous insertion into protoporphyrin IX. This chain is Ferrochelatase, found in Stenotrophomonas maltophilia (strain R551-3).